The primary structure comprises 430 residues: Bifunctional protein GlmU (430 aa).

The pyrophosphorylase stretch occupies residues 1–227 (MISKTHTFVI…GEEATGINNR (227 aa)). UDP-N-acetyl-alpha-D-glucosamine-binding positions include K25, Q74, 79–80 (GT), 104–106 (YGD), G140, E154, N168, and N225. Residue D106 coordinates Mg(2+). A Mg(2+)-binding site is contributed by N225. Positions 228-248 (NDLIKAEFYFQENKRKIFTDS) are linker. Residues 249–430 (GVTLVAPETV…REKQVTKRIK (182 aa)) are N-acetyltransferase. UDP-N-acetyl-alpha-D-glucosamine-binding residues include R314 and K332. H344 acts as the Proton acceptor in catalysis. UDP-N-acetyl-alpha-D-glucosamine-binding residues include Y347 and N358. Acetyl-CoA-binding positions include A361, 367–368 (NY), A404, and R421.

This sequence in the N-terminal section; belongs to the N-acetylglucosamine-1-phosphate uridyltransferase family. It in the C-terminal section; belongs to the transferase hexapeptide repeat family. In terms of assembly, homotrimer. Mg(2+) serves as cofactor.

Its subcellular location is the cytoplasm. The enzyme catalyses alpha-D-glucosamine 1-phosphate + acetyl-CoA = N-acetyl-alpha-D-glucosamine 1-phosphate + CoA + H(+). It catalyses the reaction N-acetyl-alpha-D-glucosamine 1-phosphate + UTP + H(+) = UDP-N-acetyl-alpha-D-glucosamine + diphosphate. The protein operates within nucleotide-sugar biosynthesis; UDP-N-acetyl-alpha-D-glucosamine biosynthesis; N-acetyl-alpha-D-glucosamine 1-phosphate from alpha-D-glucosamine 6-phosphate (route II): step 2/2. It participates in nucleotide-sugar biosynthesis; UDP-N-acetyl-alpha-D-glucosamine biosynthesis; UDP-N-acetyl-alpha-D-glucosamine from N-acetyl-alpha-D-glucosamine 1-phosphate: step 1/1. It functions in the pathway bacterial outer membrane biogenesis; LPS lipid A biosynthesis. In terms of biological role, catalyzes the last two sequential reactions in the de novo biosynthetic pathway for UDP-N-acetylglucosamine (UDP-GlcNAc). The C-terminal domain catalyzes the transfer of acetyl group from acetyl coenzyme A to glucosamine-1-phosphate (GlcN-1-P) to produce N-acetylglucosamine-1-phosphate (GlcNAc-1-P), which is converted into UDP-GlcNAc by the transfer of uridine 5-monophosphate (from uridine 5-triphosphate), a reaction catalyzed by the N-terminal domain. The chain is Bifunctional protein GlmU from Wolbachia pipientis wMel.